The chain runs to 541 residues: Chaperonin GroEL (541 aa).

ATP-binding positions include 29–32, 86–90, G413, 478–480, and D494; these read TLGP, DGTTT, and NAL.

Belongs to the chaperonin (HSP60) family. Forms a cylinder of 14 subunits composed of two heptameric rings stacked back-to-back. Interacts with the co-chaperonin GroES.

It localises to the cytoplasm. It catalyses the reaction ATP + H2O + a folded polypeptide = ADP + phosphate + an unfolded polypeptide.. Its function is as follows. Together with its co-chaperonin GroES, plays an essential role in assisting protein folding. The GroEL-GroES system forms a nano-cage that allows encapsulation of the non-native substrate proteins and provides a physical environment optimized to promote and accelerate protein folding. This Lachnoclostridium phytofermentans (strain ATCC 700394 / DSM 18823 / ISDg) (Clostridium phytofermentans) protein is Chaperonin GroEL.